The chain runs to 134 residues: Probable glycine cleavage system H protein (134 aa).

Residues 29–110 (TVLVGISDYA…PYENWIAKLK (82 aa)) form the Lipoyl-binding domain. The residue at position 70 (Lys-70) is an N6-lipoyllysine.

Belongs to the GcvH family. In terms of assembly, the glycine cleavage system is composed of four proteins: P, T, L and H. The cofactor is (R)-lipoate.

In terms of biological role, the glycine cleavage system catalyzes the degradation of glycine. The H protein shuttles the methylamine group of glycine from the P protein to the T protein. This chain is Probable glycine cleavage system H protein, found in Thermococcus kodakarensis (strain ATCC BAA-918 / JCM 12380 / KOD1) (Pyrococcus kodakaraensis (strain KOD1)).